The primary structure comprises 197 residues: Protein shisa-4 (197 aa).

An N-terminal signal peptide occupies residues 1 to 27 (MPPAGLRRAAPLTAIALLVLGAPLVLA). The Extracellular segment spans residues 28–87 (GEDCLWYLDRNGSWHPGFNCEFFTFCCGTCYHRYCCRDLTLLITERQQKHCLAFSPKTIA). The chain crosses the membrane as a helical span at residues 88-108 (GIASAVILFVAVVATTICCFL). Residues 109–197 (CSCCYLYRRR…MPPQPSYPGA (89 aa)) are Cytoplasmic-facing.

The protein belongs to the shisa family.

It localises to the membrane. The sequence is that of Protein shisa-4 (SHISA4) from Homo sapiens (Human).